The chain runs to 447 residues: uncharacterized protein (447 aa).

A run of 12 helical transmembrane segments spans residues 17-37 (IMMM…SSSA), 40-60 (VAGP…LFIM), 95-115 (IYWK…AIFI), 118-138 (WLPG…VTIV), 154-174 (AMIK…LLFV), 200-220 (GLIT…IIGV), 243-263 (IVAF…WNQV), 289-311 (AVIL…RILY), 333-353 (MFAI…SLFA), 361-381 (LMGS…FAHL), 393-415 (YYVK…ILIG), and 419-441 (TTSI…AYLV).

It belongs to the amino acid-polyamine-organocation (APC) superfamily.

It is found in the cell membrane. May participate in leucine metabolism. May transport leucine or a compound related to leucine metabolism. This is an uncharacterized protein from Bacillus subtilis (strain 168).